Here is a 237-residue protein sequence, read N- to C-terminus: Endonuclease NucS (237 aa).

It belongs to the NucS endonuclease family.

The protein localises to the cytoplasm. Its function is as follows. Cleaves both 3' and 5' ssDNA extremities of branched DNA structures. This chain is Endonuclease NucS, found in Saccharolobus islandicus (strain L.S.2.15 / Lassen #1) (Sulfolobus islandicus).